The primary structure comprises 340 residues: Uroporphyrinogen decarboxylase (340 aa).

Residues 23 to 27 (RQAGR), Asp72, Tyr147, Thr202, and His316 contribute to the substrate site.

It belongs to the uroporphyrinogen decarboxylase family. As to quaternary structure, homodimer.

It localises to the cytoplasm. It carries out the reaction uroporphyrinogen III + 4 H(+) = coproporphyrinogen III + 4 CO2. Its pathway is porphyrin-containing compound metabolism; protoporphyrin-IX biosynthesis; coproporphyrinogen-III from 5-aminolevulinate: step 4/4. Functionally, catalyzes the decarboxylation of four acetate groups of uroporphyrinogen-III to yield coproporphyrinogen-III. The sequence is that of Uroporphyrinogen decarboxylase from Geobacter sulfurreducens (strain ATCC 51573 / DSM 12127 / PCA).